A 224-amino-acid chain; its full sequence is Abasic site processing protein YoqW (224 aa).

C2 acts as the Nucleophile in catalysis. At C2 the chain carries Thiazolidine linkage to a ring-opened DNA abasic site. The active site involves E106.

The protein belongs to the SOS response-associated peptidase family.

Formation and reversal of DNA-protein cross-link depends on DNA context. Catalyzes formation of the thiazolidine linkage in presence of abasic sites in single-stranded DNA. Mediates the reversal of the thiazolidine cross-link in presence of double stranded DNA. Functionally, sensor of abasic sites in single-stranded DNA (ssDNA) required to preserve genome integrity by promoting error-free repair of abasic sites. Recognizes and binds abasic sites in ssDNA at replication forks and chemically modifies the lesion by forming a covalent cross-link with DNA: forms a stable thiazolidine linkage between a ring-opened abasic site and the alpha-amino and sulfhydryl substituents of its N-terminal catalytic cysteine residue. The DNA-protein cross-link is then reversed: able to catalyze the reversal of the thiazolidine cross-link and cycle between a cross-link and a non-cross-linked state depending on DNA context: mediates self-reversal of the thiazolidine cross-link in double stranded DNA. May act as a protease: mediates autocatalytic processing of its N-terminal methionine in order to expose the catalytic cysteine. This is Abasic site processing protein YoqW (yoqW) from Bacillus subtilis (strain 168).